A 196-amino-acid chain; its full sequence is Orotate phosphoribosyltransferase (196 aa).

A 5-phospho-alpha-D-ribose 1-diphosphate-binding site is contributed by 117–125 (EDIVTTGLS). 2 residues coordinate orotate: T121 and R149.

It belongs to the purine/pyrimidine phosphoribosyltransferase family. PyrE subfamily. In terms of assembly, homodimer. Mg(2+) serves as cofactor.

The enzyme catalyses orotidine 5'-phosphate + diphosphate = orotate + 5-phospho-alpha-D-ribose 1-diphosphate. Its pathway is pyrimidine metabolism; UMP biosynthesis via de novo pathway; UMP from orotate: step 1/2. Functionally, catalyzes the transfer of a ribosyl phosphate group from 5-phosphoribose 1-diphosphate to orotate, leading to the formation of orotidine monophosphate (OMP). This is Orotate phosphoribosyltransferase from Methylobacterium sp. (strain 4-46).